Consider the following 354-residue polypeptide: Fusarinine C esterase sidJ (354 aa).

This sequence belongs to the sidJ hydrolase family. In terms of assembly, homodimer.

It catalyses the reaction fusarinine C + 3 H2O = 3 fusarinine + Fe(3+). Functionally, displays specific fusarinine C (FsC) esterase activity but does not hydrolyze triacetylfusarinine C (TAFC), which has the same core structure as fusarinine C. Both extra- and intracellular siderophores have been shown to be crucial for the virulence. Subsequent to chelation of iron and uptake, FsC and TAFC are hydrolyzed and the iron is transferred to the metabolism or to the intracellular siderophore ferricrocin (FC) for transport and storage of iron. The chain is Fusarinine C esterase sidJ from Aspergillus fumigatus (strain ATCC MYA-4609 / CBS 101355 / FGSC A1100 / Af293) (Neosartorya fumigata).